We begin with the raw amino-acid sequence, 726 residues long: ATP-dependent permease MDL1, mitochondrial (726 aa).

Residues 1–112 constitute a mitochondrion transit peptide; that stretch reads MDPIRFGLSR…LAFLKLCVRH (112 aa). Asn66, Asn113, and Asn132 each carry an N-linked (GlcNAc...) asparagine glycan. Helical transmembrane passes span 158-178, 196-216, 306-326, 386-406, and 423-443; these read FFIA…IPYI, IMGI…FLGS, GYMS…GEYV, GIFF…ILAL, and SFLL…GCFT. In terms of domain architecture, ABC transmembrane type-1 spans 158–447; that stretch reads FFIAGSLLLV…LSGCFTDIMK (290 aa). The ABC transporter domain maps to 482–719; it reads LSFRNVGFAY…GTNFYKLMRW (238 aa). An N-linked (GlcNAc...) asparagine glycan is attached at Asn502. An ATP-binding site is contributed by 517–524; sequence APSGGGKS. Asn584, Asn598, and Asn668 each carry an N-linked (GlcNAc...) asparagine glycan.

It belongs to the ABC transporter superfamily. ABCB family. Mitochondrial peptide exporter (TC 3.A.1.212) subfamily.

Its subcellular location is the mitochondrion inner membrane. In terms of biological role, mediates export of peptides generated upon proteolysis of mitochondrial inner membrane proteins. This Schizosaccharomyces pombe (strain 972 / ATCC 24843) (Fission yeast) protein is ATP-dependent permease MDL1, mitochondrial (mdl1).